The following is a 155-amino-acid chain: Small ribosomal subunit protein uS7c (155 aa).

Belongs to the universal ribosomal protein uS7 family. As to quaternary structure, part of the 30S ribosomal subunit.

The protein resides in the plastid. It is found in the chloroplast. Its function is as follows. One of the primary rRNA binding proteins, it binds directly to 16S rRNA where it nucleates assembly of the head domain of the 30S subunit. The protein is Small ribosomal subunit protein uS7c (rps7) of Hydrastis canadensis (Goldenseal).